Reading from the N-terminus, the 330-residue chain is Thiosulfate transporter TsuA (330 aa).

Over 1-2 the chain is Periplasmic; it reads MI. Residues 3 to 18 form a helical membrane-spanning segment; that stretch reads WTGLLVGFLFGIVLQR. The Cytoplasmic portion of the chain corresponds to 19–36; sequence GRICFNSAFRDVLLFKDN. A helical transmembrane segment spans residues 37 to 59; that stretch reads YLFKLAVFTLALEMILFVLLSQV. The Periplasmic segment spans residues 60–70; the sequence is GLMQMNPKPLN. The helical transmembrane segment at 71–87 threads the bilayer; it reads LVGNIIGGFVFGLGMVL. Over 88–102 the chain is Cytoplasmic; the sequence is AGGCASGVTYRVGEG. The helical transmembrane segment at 103 to 121 threads the bilayer; sequence LTTAWFAALFYGLGAYATK. The Periplasmic portion of the chain corresponds to 122–162; sequence SGAFSWWLSWVGQFKSPLSVEESAYYVKGAGPTISSVLGLN. The helical transmembrane segment at 163–180 threads the bilayer; it reads PWIPALVIAALFILWAFG. The Cytoplasmic segment spans residues 181–189; the sequence is TKTTSRETK. The helical transmembrane segment at 190-211 threads the bilayer; that stretch reads FNWKIASVCLALVAGLGFITST. Residues 212–239 lie on the Periplasmic side of the membrane; sequence LSGRKYGLGITGGWINLFQGFLTNSPLN. Residues 240-258 form a helical membrane-spanning segment; it reads WEGLEIVGIILGAGVAAAV. Residues 259–269 lie on the Cytoplasmic side of the membrane; that stretch reads AGEFKLRMPKN. Residues 270-289 form a helical membrane-spanning segment; that stretch reads PVTYLQVGIGGLLMGIGAVT. At 290-306 the chain is on the periplasmic side; it reads AGGCNIGHFLTGVPQLA. Residues 307-326 traverse the membrane as a helical segment; the sequence is LSSWLASIFFILGNWTMAWI. At 327–330 the chain is on the cytoplasmic side; the sequence is LFRR.

It belongs to the TsuA/YedE (TC 9.B.102) family.

The protein resides in the cell inner membrane. The enzyme catalyses thiosulfate(in) = thiosulfate(out). In terms of biological role, mediates thiosulfate uptake. This Spirochaeta thermophila (strain ATCC 700085 / DSM 6578 / Z-1203) protein is Thiosulfate transporter TsuA.